The following is a 189-amino-acid chain: Flavin prenyltransferase UbiX (189 aa).

FMN contacts are provided by residues 10–12 (GAS), Ser37, 88–91 (SIKT), and Arg123. Dimethylallyl phosphate-binding residues include Tyr153 and Arg169.

It belongs to the UbiX/PAD1 family.

The catalysed reaction is dimethylallyl phosphate + FMNH2 = prenylated FMNH2 + phosphate. The protein operates within cofactor biosynthesis; ubiquinone biosynthesis. Its function is as follows. Flavin prenyltransferase that catalyzes the synthesis of the prenylated FMN cofactor (prenyl-FMN) for 4-hydroxy-3-polyprenylbenzoic acid decarboxylase UbiD. The prenyltransferase is metal-independent and links a dimethylallyl moiety from dimethylallyl monophosphate (DMAP) to the flavin N5 and C6 atoms of FMN. The protein is Flavin prenyltransferase UbiX of Escherichia coli O157:H7.